The sequence spans 201 residues: Ras-related protein Rab-1C (201 aa).

Residues 1-20 (MGCSPSKEGNGSFSSTSTSF) are disordered. G2 carries the N-myristoyl glycine lipid modification. The S-palmitoyl cysteine moiety is linked to residue C3. GTP contacts are provided by residues 40 to 48 (GDSGVGKSC), 58 to 65 (FTDSYIST), 88 to 92 (DTAGQ), 146 to 149 (NKCD), and 176 to 178 (SAK). The short motif at 62–70 (YISTIGVDF) is the Effector region element.

The protein belongs to the small GTPase superfamily. Rab family. In terms of processing, although this sequence lacks the C-terminal cysteine motifs subject to isoprenylation in other Rab proteins, it does have N-terminal myristoylation and S-palmitoylation sequence motifs.

This chain is Ras-related protein Rab-1C (Rab1C), found in Dictyostelium discoideum (Social amoeba).